Reading from the N-terminus, the 319-residue chain is Zinc metalloproteinase/disintegrin (319 aa).

A propeptide spanning residues 1–28 is cleaved from the precursor; sequence EDEAPKMCGVTQNWESYEPIKKASQSNL. Positions 34–230 constitute a Peptidase M12B domain; sequence RYIELVIVAD…QKPQCILNKP (197 aa). Ca(2+) is bound by residues E37 and D121. Intrachain disulfides connect C145-C225, C185-C209, and C187-C192. H170 is a Zn(2+) binding site. Residue E171 is part of the active site. Residues H174 and H180 each coordinate Zn(2+). Positions 225 and 228 each coordinate Ca(2+). A propeptide spanning residues 231–246 is cleaved from the precursor; that stretch reads LRTDTVSTPVSGNELL. A Disintegrin domain is found at 238-319; it reads TPVSGNELLE…AGCPRNPFHA (82 aa). Intrachain disulfides connect C252/C267, C254/C262, C261/C284, C275/C281, C280/C305, and C293/C312. Residues 297 to 299 carry the Cell attachment site motif; that stretch reads RGD.

Belongs to the venom metalloproteinase (M12B) family. P-II subfamily. P-IIa sub-subfamily. In terms of assembly, monomer. Zn(2+) is required as a cofactor. Expressed by the venom gland.

It localises to the secreted. Excess of calcium ions significantly suppress the autoproteolysis of the enzyme. In terms of biological role, metalloproteinase that impairs hemostasis in the envenomed animal. Shows autoproteolysis dependent on pH and temperature. Does not show hemorrhagic activity. Its function is as follows. Inhibits platelet aggregation induced by ADP (IC(50) is 200 nM), collagen (IC(50) is 500 nM), thrombin and epinephrin (IC(50) is 300 nM). Does not inhibit aggregation induced by ristocetin. Functionally, inhibits platelet aggregation induced by ADP (IC(50) is 100 nM), collagen (IC(50) is 500 nM), thrombin and epinephrin (IC(50) is 300 nM). Does not inhibit aggregation induced by ristocetin. Significantly inhibits angiogenesis both in vivo and in vitro. The sequence is that of Zinc metalloproteinase/disintegrin from Gloydius brevicauda (Korean slamosa snake).